Reading from the N-terminus, the 298-residue chain is Serine/threonine-protein kinase 1 (298 aa).

In terms of domain architecture, Protein kinase spans 38–276; sequence FIATRPMFEG…FKSLVSHPWF (239 aa). ATP contacts are provided by residues 45 to 53 and Lys-65; that span reads FEGGRNNVF. Residue Asp-152 is the Proton acceptor of the active site.

It belongs to the protein kinase superfamily. Ser/Thr protein kinase family.

Its subcellular location is the virion. It localises to the host cytoplasm. The catalysed reaction is L-seryl-[protein] + ATP = O-phospho-L-seryl-[protein] + ADP + H(+). It carries out the reaction L-threonyl-[protein] + ATP = O-phospho-L-threonyl-[protein] + ADP + H(+). Functionally, essential for viral replication. It may mediate the virus progression through DNA replication. This chain is Serine/threonine-protein kinase 1, found in African swine fever virus (strain Badajoz 1971 Vero-adapted) (Ba71V).